Consider the following 478-residue polypeptide: Cytochrome c-552 (478 aa).

The N-terminal stretch at 1 to 26 is a signal peptide; that stretch reads MTRIKINARRIFSLLIPFFFFTSVHA. A heme c-binding site is contributed by histidine 94. Heme-binding residues include cysteine 122, cysteine 125, and lysine 126. 6 residues coordinate heme c: cysteine 160, cysteine 163, histidine 164, cysteine 209, cysteine 212, and histidine 213. Residues glutamate 215, tyrosine 216, lysine 261, and glutamine 263 each contribute to the Ca(2+) site. Tyrosine 216 provides a ligand contact to substrate. Histidine 264 lines the substrate pocket. 9 residues coordinate heme c: histidine 275, cysteine 282, cysteine 285, histidine 286, histidine 301, cysteine 314, cysteine 317, histidine 318, and histidine 393.

Belongs to the cytochrome c-552 family. Ca(2+) is required as a cofactor. Requires heme c as cofactor.

The protein localises to the periplasm. It catalyses the reaction 6 Fe(III)-[cytochrome c] + NH4(+) + 2 H2O = 6 Fe(II)-[cytochrome c] + nitrite + 8 H(+). Its pathway is nitrogen metabolism; nitrate reduction (assimilation). Its function is as follows. Catalyzes the reduction of nitrite to ammonia, consuming six electrons in the process. The chain is Cytochrome c-552 from Shigella flexneri.